We begin with the raw amino-acid sequence, 724 residues long: Protein-glutamine gamma-glutamyltransferase 5 (724 aa).

N-acetylalanine is present on Ala-2. Residues Cys-283, His-342, and Asp-365 contribute to the active site. Ca(2+) is bound by residues Asn-405, Asp-407, Glu-453, and Glu-458. Polar residues-rich tracts occupy residues 473–486 (RSQGPHQANSNPFS) and 495–505 (ARSPDSPSLQP). Positions 473–505 (RSQGPHQANSNPFSSVPPRHNSARSPDSPSLQP) are disordered.

Belongs to the transglutaminase superfamily. Transglutaminase family. Ca(2+) serves as cofactor.

It localises to the cytoplasm. The enzyme catalyses L-glutaminyl-[protein] + L-lysyl-[protein] = [protein]-L-lysyl-N(6)-5-L-glutamyl-[protein] + NH4(+). Its function is as follows. Catalyzes the cross-linking of proteins and the conjugation of polyamines to proteins. Contributes to the formation of the cornified cell envelope of keratinocytes. The protein is Protein-glutamine gamma-glutamyltransferase 5 (Tgm5) of Mus musculus (Mouse).